The chain runs to 532 residues: Alkaline phosphatase (532 aa).

Positions Met1 to Ser20 are disordered. A helical; Signal-anchor for type II membrane protein transmembrane segment spans residues Trp27 to Phe47. Residue Asp68 coordinates Mg(2+). Asp68 lines the Zn(2+) pocket. Catalysis depends on Ser115, which acts as the Phosphoserine intermediate. The Mg(2+) site is built by Asp166, Thr168, and Glu306. Residues Asp311, His315, Asp352, His353, and His456 each coordinate Zn(2+).

This sequence belongs to the alkaline phosphatase family. Requires Mg(2+) as cofactor. It depends on Zn(2+) as a cofactor.

It localises to the membrane. The catalysed reaction is a phosphate monoester + H2O = an alcohol + phosphate. The polypeptide is Alkaline phosphatase (Schizosaccharomyces pombe (strain 972 / ATCC 24843) (Fission yeast)).